The following is a 152-amino-acid chain: MKTPIELKILDSRIGSEFPLPAYATPGSAGMDLRAMIDTTLTIAPGETVLIPTGIAIHVADQGLAAVILPRSGLGHKHGIVLGNLVGLIDSDYQGPLMVSCWNRSDSPFALEIGDRLAQLVFVPVVQAQFKLVDEFDSSDRGEGGFGHSGTK.

Substrate-binding positions include 71–73 (RSG), asparagine 84, 88–90 (LID), and methionine 98.

Belongs to the dUTPase family. Mg(2+) serves as cofactor.

It catalyses the reaction dUTP + H2O = dUMP + diphosphate + H(+). The protein operates within pyrimidine metabolism; dUMP biosynthesis; dUMP from dCTP (dUTP route): step 2/2. In terms of biological role, this enzyme is involved in nucleotide metabolism: it produces dUMP, the immediate precursor of thymidine nucleotides and it decreases the intracellular concentration of dUTP so that uracil cannot be incorporated into DNA. In Shewanella baltica (strain OS155 / ATCC BAA-1091), this protein is Deoxyuridine 5'-triphosphate nucleotidohydrolase.